We begin with the raw amino-acid sequence, 413 residues long: Cell division protein FtsZ 2 (413 aa).

GTP is bound by residues 130-132 (GTG), Glu169, Arg173, and Asp216.

The protein belongs to the FtsZ family. Homodimer. Polymerizes to form a dynamic ring structure in a strictly GTP-dependent manner. Interacts directly with several other division proteins.

It is found in the cytoplasm. Functionally, essential cell division protein that forms a contractile ring structure (Z ring) at the future cell division site. The regulation of the ring assembly controls the timing and the location of cell division. One of the functions of the FtsZ ring is to recruit other cell division proteins to the septum to produce a new cell wall between the dividing cells. Binds GTP and shows GTPase activity. The polypeptide is Cell division protein FtsZ 2 (Pyrococcus abyssi (strain GE5 / Orsay)).